Here is a 709-residue protein sequence, read N- to C-terminus: Nucleobase-ascorbate transporter 11 (709 aa).

Disordered stretches follow at residues 1–28 and 58–167; these read MDSGSGFDPDTGNNKGNGSGGGNGYGER and TGFV…SEDG. Over residues 15–25 the composition is skewed to gly residues; that stretch reads KGNGSGGGNGY. Over residues 65-74 the composition is skewed to polar residues; the sequence is SGETSTSTRT. 3 stretches are compositionally biased toward basic and acidic residues: residues 75 to 89, 108 to 132, and 142 to 151; these read KFGESSDFDLPKGRD, NRPEIEHVTGSEPVSREEEERRLNR, and EGGKINKDLE. A run of 12 helical transmembrane segments spans residues 196 to 216, 222 to 242, 246 to 266, 288 to 308, 310 to 330, 336 to 356, 369 to 389, 454 to 474, 532 to 552, 555 to 575, 590 to 610, and 642 to 662; these read YLSLVGSLVFIPLVIVPAMDG, ASVISTMLLLTGVTTILHCYF, LPLVQGSSFVYLAPVLVVINS, IIVGSLFQCILGFSGLMSLLL, FINPVVVAPTVAAVGLAFFSY, GTCVEISVPLILLLLIFTLYL, IYAVPLSALLIWTYAFFLTVG, IIMIFVSLVASVDSVGTYHSA, LVIGAMFLIVLSFLGKLGAIL, IPQALAASVLCFIWALTVSLG, ITIVGVSLFLGLSIPAYFQQY, and FAMNAVLSLNMVVTFLLAFIL.

This sequence belongs to the nucleobase:cation symporter-2 (NCS2) (TC 2.A.40) family. Expressed in leaf primordia and vasculature of pedicels, rosette leaves, sepals, carpels and siliques. Expressed in the root central cylinder.

The protein resides in the membrane. The polypeptide is Nucleobase-ascorbate transporter 11 (NAT11) (Arabidopsis thaliana (Mouse-ear cress)).